An 80-amino-acid chain; its full sequence is Large ribosomal subunit protein bL31B (80 aa).

The protein belongs to the bacterial ribosomal protein bL31 family. Type B subfamily. In terms of assembly, part of the 50S ribosomal subunit.

The protein is Large ribosomal subunit protein bL31B of Streptococcus pneumoniae serotype 2 (strain D39 / NCTC 7466).